Consider the following 189-residue polypeptide: Chitin synthase 1 (189 aa).

This sequence belongs to the chitin synthase family.

It is found in the cell membrane. It catalyses the reaction [(1-&gt;4)-N-acetyl-beta-D-glucosaminyl](n) + UDP-N-acetyl-alpha-D-glucosamine = [(1-&gt;4)-N-acetyl-beta-D-glucosaminyl](n+1) + UDP + H(+). Functionally, polymerizes chitin, a structural polymer of the cell wall and septum, by transferring the sugar moiety of UDP-GlcNAc to the non-reducing end of the growing chitin polymer. In Exophiala exophialae (Black yeast-like fungus), this protein is Chitin synthase 1 (CHS1).